Here is a 285-residue protein sequence, read N- to C-terminus: Diphthine methyl ester synthase (285 aa).

S-adenosyl-L-methionine is bound by residues leucine 9, aspartate 84, glycine 87, 112 to 113 (SI), leucine 163, valine 221, and histidine 246.

Belongs to the diphthine synthase family.

Its subcellular location is the cytoplasm. It catalyses the reaction 2-[(3S)-amino-3-carboxypropyl]-L-histidyl-[translation elongation factor 2] + 4 S-adenosyl-L-methionine = diphthine methyl ester-[translation elongation factor 2] + 4 S-adenosyl-L-homocysteine + 3 H(+). It functions in the pathway protein modification; peptidyl-diphthamide biosynthesis. Its function is as follows. S-adenosyl-L-methionine-dependent methyltransferase that catalyzes four methylations of the modified target histidine residue in translation elongation factor 2 (EF-2), to form an intermediate called diphthine methyl ester. The four successive methylation reactions represent the second step of diphthamide biosynthesis. This is Diphthine methyl ester synthase (dph5) from Emericella nidulans (strain FGSC A4 / ATCC 38163 / CBS 112.46 / NRRL 194 / M139) (Aspergillus nidulans).